Here is an 86-residue protein sequence, read N- to C-terminus: uncharacterized protein (86 aa).

The helical transmembrane segment at 12–32 (IIFIFAIIIIVVLCVITYLYL) threads the bilayer.

The protein resides in the membrane. This is an uncharacterized protein from Escherichia coli (strain K12).